Reading from the N-terminus, the 431-residue chain is Histidinol dehydrogenase (431 aa).

Positions 127, 189, and 212 each coordinate NAD(+). Residues serine 237, glutamine 259, and histidine 262 each contribute to the substrate site. Zn(2+)-binding residues include glutamine 259 and histidine 262. Active-site proton acceptor residues include glutamate 326 and histidine 327. 4 residues coordinate substrate: histidine 327, aspartate 360, glutamate 414, and histidine 419. A Zn(2+)-binding site is contributed by aspartate 360. Histidine 419 provides a ligand contact to Zn(2+).

This sequence belongs to the histidinol dehydrogenase family. Requires Zn(2+) as cofactor.

The enzyme catalyses L-histidinol + 2 NAD(+) + H2O = L-histidine + 2 NADH + 3 H(+). The protein operates within amino-acid biosynthesis; L-histidine biosynthesis; L-histidine from 5-phospho-alpha-D-ribose 1-diphosphate: step 9/9. In terms of biological role, catalyzes the sequential NAD-dependent oxidations of L-histidinol to L-histidinaldehyde and then to L-histidine. This chain is Histidinol dehydrogenase, found in Xanthomonas axonopodis pv. citri (strain 306).